The following is a 129-amino-acid chain: Fluoride-specific ion channel FluC (129 aa).

The next 4 helical transmembrane spans lie at 8 to 28 (ILLV…VALW), 34 to 54 (AVFP…IGFI), 70 to 90 (IFLV…MIEH), and 102 to 122 (AALY…LGII). Na(+) is bound by residues G78 and T81.

It belongs to the fluoride channel Fluc/FEX (TC 1.A.43) family.

The protein localises to the cell inner membrane. It catalyses the reaction fluoride(in) = fluoride(out). With respect to regulation, na(+) is not transported, but it plays an essential structural role and its presence is essential for fluoride channel function. Functionally, fluoride-specific ion channel. Important for reducing fluoride concentration in the cell, thus reducing its toxicity. The polypeptide is Fluoride-specific ion channel FluC (Chlorobium chlorochromatii (strain CaD3)).